The chain runs to 392 residues: MGSIDAAVLGSEKKSNPGKATILALGKAFPHQLVMQEYLVDGYFKTTKCDDPELKQKLTRLCKTTTVKTRYVVMSEEILKKYPELAIEGGSTVTQRLDICNDAVTEMAVEASRACIKNWGRSISDITHVVYVSSSEARLPGGDLYLAKGLGLSPDTHRVLLYFVGCSGGVAGLRVAKDIAENNPGSRVLLATSETTIIGFKPPSVDRPYDLVGVALFGDGAGAMIIGSDPDPICEKPLFELHTAIQNFLPETEKTIDGRLTEQGINFKLSRELPQIIEDNVENFCKKLIGKAGLAHKNYNQMFWAVHPGGPAILNRIEKRLNLSPEKLSPSRRALMDYGNASSNSIVYVLEYMLEESKKVRNMNEEENEWGLILAFGPGVTFEGIIARNLDV.

Position 57 to 64 (57 to 64) interacts with CoA; it reads KLTRLCKT. Cysteine 166 (nucleophile) is an active-site residue. 218–219 lines the substrate pocket; that stretch reads GD. CoA-binding positions include leucine 269, 309 to 312, and alanine 312; that span reads GGPA.

It belongs to the thiolase-like superfamily. Chalcone/stilbene synthases family. In terms of assembly, homodimer. Interacts with 4CLL1/ACOS5 and TKPR1. In terms of tissue distribution, expressed in flowers and flower buds (at protein level). Mostly confined to anther tapetal cells.

It localises to the endoplasmic reticulum. The protein operates within secondary metabolite biosynthesis; flavonoid biosynthesis. Its function is as follows. Plant type III polyketide synthases (PKSs) that catalyzes the condensation of malonyl-CoA units with various CoA ester starter molecules to generate a diverse array of natural products including long-chain alkyl alpha-pyrones. Accepts up to C(20) chain-length fatty acyl CoAs as starter substrates, and carries out sequential condensations with malonyl-CoA to produce triketide and tetraketide alpha-pyrones, potential sporopollenin precursors. Favorite substrates for are midchain- and v-hydroxylated fatty acyl-CoAs (e.g. 12-hydroxyoctadecanoyl-CoA and 16-hydroxyhexadecanoyl-CoA). Required for pollen development and sporopollenin biosynthesis, the major constituent of exine in the outer pollen wall. In vitro, can use 4-coumaroyl-coenzyme A as substrate to produce bis-noryangonin and fatty acyl-coenzyme A as substrate to produce medium-chain alkyl pyrones. May play a role in both the synthesis of pollen fatty acids and phenolics found in exine. The protein is Type III polyketide synthase B of Arabidopsis thaliana (Mouse-ear cress).